Reading from the N-terminus, the 86-residue chain is Beta-mammal/insect toxin To1 (86 aa).

The first 20 residues, 1–20 (MTRFVLFISCFFLIDMIVEC), serve as a signal peptide directing secretion. The LCN-type CS-alpha/beta domain occupies 22-84 (KEGYLVGNDG…TWSSATNKCK (63 aa)). 4 disulfide bridges follow: Cys-32–Cys-83, Cys-36–Cys-58, Cys-44–Cys-64, and Cys-48–Cys-66. Lysine amide is present on Lys-84.

Belongs to the long (4 C-C) scorpion toxin superfamily. Sodium channel inhibitor family. Beta subfamily. Expressed by the venom gland.

It localises to the secreted. Its function is as follows. Beta toxin that show multiple effects. It enhances the open probability at more negative potentials of human Nav1.3/SCN3A and Nav1.6/SCN8A, of the insect channel BgNaV1 and of arachnid VdNaV1 channel. It promotes an important shift in slow inactivation processes as a function of the prepulse voltage in human Nav1.3/SCN3A and Nav1.6/SCN8A and a small shift in Nav1.1/SCN1A, Nav1.2/SCN2A and Nav1.4/SCN4A. Finally, it reduces the peak of sodium currents in Nav1.3/SCN3A (80% inhibition at 70 nM of toxin), Nav1.6/SCN8A (55.3%), Nav1.1/SCN1A (53.3%), Nav1.5/SCN5A (46.7%), Nav1.2/SCN2A (42.7%) and Nav1.4/SCN4A (20%) voltage-gated sodium channels. It has also been shown to affect the sodium current permeability of rat cerebellum granular cells in a partially reversible manner. In vivo, an intraperitoneal injection (20 ug) into mice produces excitability, respiratory problems, convulsions and death, within the first 30 minutes after injection. The polypeptide is Beta-mammal/insect toxin To1 (Tityus obscurus (Amazonian scorpion)).